Here is a 322-residue protein sequence, read N- to C-terminus: Picrinine-N-methytransferase (322 aa).

The segment at M103 to G112 is SAM motif I. Positions G166–I174 are SAM motif II. The segment at V193 to I202 is SAM motif III.

It belongs to the class I-like SAM-binding methyltransferase superfamily. gTMT family. As to quaternary structure, homodimer. As to expression, accumulates in tissues actively synthesizing monoterpenoid indole alkaloids (MIAs) (at protein level). Mainly expressed in young leaves, but barely in roots and stems.

It localises to the cytoplasm. The protein localises to the cytosol. The enzyme catalyses picrinine + S-adenosyl-L-methionine = ervincine + S-adenosyl-L-homocysteine + H(+). It functions in the pathway alkaloid biosynthesis; vindoline biosynthesis. S-adenosyl-L-methionine-dependent N-methyltransferase involved in the biosynthesis of biologically active monoterpenoid indole alkaloids (MIAs) natural products including vindoline. Catalyzes the conversion of picrinine to N-methylpicrinine (ervincine). Also accepts, with low efficiency, 21-hydroxycyclolochnericine and norajmaline as substrates. The sequence is that of Picrinine-N-methytransferase from Vinca minor (Common periwinkle).